We begin with the raw amino-acid sequence, 605 residues long: Leucine aminopeptidase (605 aa).

Positions 374, 379, and 386 each coordinate a peptide. K374 and D379 together coordinate Zn(2+). Residues N384–S401 form an L13 loop region. K386 is an active-site residue. Zn(2+) contacts are provided by D394, M396, D399, D459, and E461. A peptide-binding residues include D399 and D459. R463 is a catalytic residue.

It belongs to the peptidase M17 family. As to quaternary structure, homohexamer composed of dimer of trimers. Both the identity and concentration of metal ions available dictate the extent to which oligomerization occurs; Mn(2+) and Co(2+) induces oligomerization, whereas Mg(2+) has no effect, and Zn(2+) causes irreversible protein aggregation in vitro. The cofactor is Zn(2+).

It is found in the cytoplasm. The catalysed reaction is Release of an N-terminal amino acid, Xaa-|-Yaa-, in which Xaa is preferably Leu, but may be other amino acids including Pro although not Arg or Lys, and Yaa may be Pro. Amino acid amides and methyl esters are also readily hydrolyzed, but rates on arylamides are exceedingly low.. It catalyses the reaction L-cysteinylglycine + H2O = L-cysteine + glycine. With respect to regulation, oligomerization is required for catalytic activity and is metal-dependent. The type of metal that binds the 2 metal binding sites influences catalytic activity and substrate specificity. In vitro, activated by Co(2+), Mn(2+), Ni(2+), Mg(2+) and Zn(2+) with decreasing strength. Occupancy of the site 2 is essential and sufficient for activating the enzyme but occupation of the 2 sites is necessary for full catalytic activity. Inhibited by fungal metabolite bestatin. Inhibited by Phe-Naphthyl (PNAP). Functionally, aminopeptidase which preferentially cleaves leucine residues from the N-terminus of peptides. Also, has some activity towards tryptophan and methionine and to a lesser extent towards phenylalanine. Has very low activity or no activity towards the other amino acids. In addition, cleaves the Cys-Gly dipeptide, probably as part of the glutathione regulation pathway; cleavage only occurs in the presence of Mn(2+). During the asexual blood stage, plays a role in the final step of host hemoglobin catabolism, by cleaving hemoglobin-derived oligopeptides providing a source of amino acids for the parasite protein synthesis and for the maintenance of osmotic homeostasis. During the asexual blood stage, may also play a role during the ring-trophozoite transition. The sequence is that of Leucine aminopeptidase from Plasmodium falciparum (isolate 3D7).